The primary structure comprises 406 residues: UPF0761 membrane protein NMB0524 (406 aa).

The next 6 helical transmembrane spans lie at 43–63 (LLALVPVLTVMVAVASIFPVF), 100–120 (LTAIGSVMLVVTSLMLIRTID), 139–159 (FLVYWALLTFGPLSLGVGISF), 176–196 (WSGALRTAATLTFMTLLLWGL), 210–230 (AFVGALATAFCLETARSLFTW), and 248–268 (VPFFLLWLNLLWTLVLGGAVL).

The protein belongs to the UPF0761 family.

The protein resides in the cell inner membrane. The sequence is that of UPF0761 membrane protein NMB0524 from Neisseria meningitidis serogroup B (strain ATCC BAA-335 / MC58).